The sequence spans 93 residues: Acylphosphatase (93 aa).

The Acylphosphatase-like domain occupies 5-91 (RAHFLVKGFV…RGETTFRIRS (87 aa)). Catalysis depends on residues arginine 20 and asparagine 38.

Belongs to the acylphosphatase family.

The enzyme catalyses an acyl phosphate + H2O = a carboxylate + phosphate + H(+). This Moorella thermoacetica (strain ATCC 39073 / JCM 9320) protein is Acylphosphatase (acyP).